A 60-amino-acid polypeptide reads, in one-letter code: Cytochrome c oxidase assembly protein COX14 homolog (60 aa).

A helical transmembrane segment spans residues 10-32 (VGYRLFSGSMMLLTVYGGYLCVV).

It is found in the mitochondrion membrane. Its function is as follows. Plays a role in the assembly or stability of the cytochrome c oxidase complex (COX). The sequence is that of Cytochrome c oxidase assembly protein COX14 homolog from Danio rerio (Zebrafish).